Reading from the N-terminus, the 953-residue chain is Eukaryotic translation initiation factor 3 subunit A (953 aa).

In terms of domain architecture, PCI spans 323–504 (LQKMASHVLL…KSISFGLDLH (182 aa)). 3 coiled-coil regions span residues 593 to 642 (QERE…KRQA), 670 to 704 (MNAD…VDYF), and 732 to 877 (ENQE…LEER). The interval 603–623 (IKKQKVENQEAEQKRLDEERR) is disordered. 2 disordered regions span residues 810 to 861 (ERKK…EIDR) and 893 to 953 (GWGD…ITMS). 3 stretches are compositionally biased toward basic and acidic residues: residues 812–861 (KKIE…EIDR), 895–919 (GDHE…RGGD), and 928–953 (WQRE…ITMS).

This sequence belongs to the eIF-3 subunit A family. As to quaternary structure, component of the eukaryotic translation initiation factor 3 (eIF-3) complex.

The protein resides in the cytoplasm. Functionally, RNA-binding component of the eukaryotic translation initiation factor 3 (eIF-3) complex, which is involved in protein synthesis of a specialized repertoire of mRNAs and, together with other initiation factors, stimulates binding of mRNA and methionyl-tRNAi to the 40S ribosome. The eIF-3 complex specifically targets and initiates translation of a subset of mRNAs involved in cell proliferation. The sequence is that of Eukaryotic translation initiation factor 3 subunit A from Nematostella vectensis (Starlet sea anemone).